A 374-amino-acid polypeptide reads, in one-letter code: Putative serine/threonine-protein kinase ZK507.3 (374 aa).

The 272-residue stretch at 25–296 folds into the Protein kinase domain; the sequence is WKVIVELGKG…CKLTLKEPLV (272 aa). ATP contacts are provided by residues 31–39 and Lys-60; that span reads LGKGGYGTV. The active-site Proton acceptor is the Asp-158. The disordered stretch occupies residues 302-374; the sequence is NDNESGSTPT…KTRNKKPSRK (73 aa). Low complexity predominate over residues 306-324; that stretch reads SGSTPTTSATACSPSSSTG. Over residues 334–343 the composition is skewed to polar residues; that stretch reads IASNIDQKSI. Over residues 364-374 the composition is skewed to basic residues; sequence TKTRNKKPSRK.

This sequence belongs to the protein kinase superfamily. Ser/Thr protein kinase family.

It catalyses the reaction L-seryl-[protein] + ATP = O-phospho-L-seryl-[protein] + ADP + H(+). It carries out the reaction L-threonyl-[protein] + ATP = O-phospho-L-threonyl-[protein] + ADP + H(+). In Caenorhabditis elegans, this protein is Putative serine/threonine-protein kinase ZK507.3.